We begin with the raw amino-acid sequence, 740 residues long: Zinc finger CCCH domain-containing protein 14 (740 aa).

4 disordered regions span residues 82 to 240, 254 to 314, 390 to 426, and 444 to 469; these read SNKQ…NIKG, VSAG…DDAV, ITPSRDSTPTDDSPTMQKWNGQIEIGDDSEESEDDEE, and SFRDEEDELPPTHQLSGGPYAYHHST. Basic and acidic residues-rich tracts occupy residues 87–158 and 176–185; these read ETSK…EIQR and EHVRARGEKH. The span at 186–200 shows a compositional bias: basic residues; that stretch reads DRHHHKDHRRGRSHE. Polar residues predominate over residues 204-214; the sequence is ITSTIVRQASA. Residues 393–409 are compositionally biased toward polar residues; it reads SRDSTPTDDSPTMQKWN. The segment covering 414–426 has biased composition (acidic residues); the sequence is IGDDSEESEDDEE. 2 consecutive C3H1-type zinc fingers follow at residues 499 to 522 and 523 to 543; these read HVKERCIFWPKCTKGDTCAFMHPT and TNCKNFPNCTFGIRCLFIHPP. The segment at 623–661 is disordered; the sequence is IKKKPAPGAESEKKEEKSDENESKAEEPKAEVAPVQPKP. Positions 632–652 are enriched in basic and acidic residues; the sequence is ESEKKEEKSDENESKAEEPKA. 3 C3H1-type zinc fingers span residues 668 to 691, 674 to 691, and 693 to 709; these read LHSMVLCRYAGACRNPICHFKHPK, CRYAGACRNPICHFKHPK, and CRFGANCRNPSCYFYHK.

This sequence belongs to the ZC3H14 family.

The protein resides in the nucleus. Its subcellular location is the cytoplasm. Functionally, RNA-binding protein involved in the biogenesis of circular RNAs (circRNAs), which are produced by back-splicing circularization of pre-mRNAs. The polypeptide is Zinc finger CCCH domain-containing protein 14 (sut-2) (Caenorhabditis elegans).